We begin with the raw amino-acid sequence, 136 residues long: Large ribosomal subunit protein uL16c (136 aa).

Belongs to the universal ribosomal protein uL16 family. As to quaternary structure, part of the 50S ribosomal subunit.

It is found in the plastid. The protein localises to the chloroplast. In Zea mays (Maize), this protein is Large ribosomal subunit protein uL16c.